A 553-amino-acid polypeptide reads, in one-letter code: Formate--tetrahydrofolate ligase (553 aa).

ATP is bound at residue 64–71 (TPAGEGKT).

It belongs to the formate--tetrahydrofolate ligase family.

It catalyses the reaction (6S)-5,6,7,8-tetrahydrofolate + formate + ATP = (6R)-10-formyltetrahydrofolate + ADP + phosphate. Its pathway is one-carbon metabolism; tetrahydrofolate interconversion. This chain is Formate--tetrahydrofolate ligase, found in Pseudothermotoga lettingae (strain ATCC BAA-301 / DSM 14385 / NBRC 107922 / TMO) (Thermotoga lettingae).